The chain runs to 461 residues: Bifunctional protein GlmU (461 aa).

Residues 1-230 (MECLMAVILA…SSEILGINDR (230 aa)) form a pyrophosphorylase region. Residues 9-12 (LAAG), K23, Q73, 78-79 (GT), 101-103 (YGD), G140, E155, N170, and N228 each bind UDP-N-acetyl-alpha-D-glucosamine. D103 is a Mg(2+) binding site. N228 is a binding site for Mg(2+). The linker stretch occupies residues 231–251 (VQLAEAGRIIRSRILKRHMKN). Residues 252 to 461 (GVTIIDPDST…KKGMLRQEKE (210 aa)) form an N-acetyltransferase region. UDP-N-acetyl-alpha-D-glucosamine contacts are provided by R333 and K351. The Proton acceptor role is filled by H363. 2 residues coordinate UDP-N-acetyl-alpha-D-glucosamine: Y366 and N377. Residues 386–387 (NY), A423, and R440 each bind acetyl-CoA.

The protein in the N-terminal section; belongs to the N-acetylglucosamine-1-phosphate uridyltransferase family. It in the C-terminal section; belongs to the transferase hexapeptide repeat family. In terms of assembly, homotrimer. Requires Mg(2+) as cofactor.

The protein localises to the cytoplasm. The catalysed reaction is alpha-D-glucosamine 1-phosphate + acetyl-CoA = N-acetyl-alpha-D-glucosamine 1-phosphate + CoA + H(+). It carries out the reaction N-acetyl-alpha-D-glucosamine 1-phosphate + UTP + H(+) = UDP-N-acetyl-alpha-D-glucosamine + diphosphate. It functions in the pathway nucleotide-sugar biosynthesis; UDP-N-acetyl-alpha-D-glucosamine biosynthesis; N-acetyl-alpha-D-glucosamine 1-phosphate from alpha-D-glucosamine 6-phosphate (route II): step 2/2. Its pathway is nucleotide-sugar biosynthesis; UDP-N-acetyl-alpha-D-glucosamine biosynthesis; UDP-N-acetyl-alpha-D-glucosamine from N-acetyl-alpha-D-glucosamine 1-phosphate: step 1/1. The protein operates within bacterial outer membrane biogenesis; LPS lipid A biosynthesis. In terms of biological role, catalyzes the last two sequential reactions in the de novo biosynthetic pathway for UDP-N-acetylglucosamine (UDP-GlcNAc). The C-terminal domain catalyzes the transfer of acetyl group from acetyl coenzyme A to glucosamine-1-phosphate (GlcN-1-P) to produce N-acetylglucosamine-1-phosphate (GlcNAc-1-P), which is converted into UDP-GlcNAc by the transfer of uridine 5-monophosphate (from uridine 5-triphosphate), a reaction catalyzed by the N-terminal domain. This chain is Bifunctional protein GlmU, found in Acetivibrio thermocellus (strain ATCC 27405 / DSM 1237 / JCM 9322 / NBRC 103400 / NCIMB 10682 / NRRL B-4536 / VPI 7372) (Clostridium thermocellum).